The chain runs to 251 residues: Putative ATP-binding protein Rv3427c in insertion sequence (251 aa).

108–115 contacts ATP; that stretch reads GPVGVGKT.

It belongs to the IS21/IS1162 putative ATP-binding protein family.

The chain is Putative ATP-binding protein Rv3427c in insertion sequence from Mycobacterium tuberculosis (strain ATCC 25618 / H37Rv).